We begin with the raw amino-acid sequence, 107 residues long: Ig kappa chain V-VI region NQ5-78.2.6 (107 aa).

Residues 1-23 (QILLTQSPAIMSASPGQKVTMTC) form a framework-1 region. Residues Cys23 and Cys87 are joined by a disulfide bond. The interval 24–33 (SASSSVSYMH) is complementarity-determining-1. Positions 34-48 (WYQQKSGTSPKRWIY) are framework-2. The segment at 49–55 (DTSKLAS) is complementarity-determining-2. Residues 56–87 (GVPARFXGSGSATSYSLTITSMQAEDAATYYC) are framework-3. The segment at 88–96 (QQWSSNPLT) is complementarity-determining-3. Positions 97-106 (FGSGTKLEXK) are framework-4.

Its function is as follows. Anti-2-phenyl oxazolone (PHOX) Antibody. The chain is Ig kappa chain V-VI region NQ5-78.2.6 from Mus musculus (Mouse).